The sequence spans 370 residues: Holliday junction branch migration complex subunit RuvB 2 (370 aa).

Positions 1–54 (MAIISSRAAGAEDPGQRQQKSSARRRESKLAFARAEGLLQPQAHPSEAQEESLR) are disordered. The tract at residues 13-214 (DPGQRQQKSS…FGQVQRLRFY (202 aa)) is large ATPase domain (RuvB-L). Residues Leu53, Arg54, Gly95, Lys98, Thr99, Thr100, 161–163 (EDF), Arg204, Tyr214, and Arg251 each bind ATP. Thr99 is a Mg(2+) binding site. Positions 215–285 (EPHELAEIVL…VAAAALELFQ (71 aa)) are small ATPAse domain (RuvB-S). The tract at residues 288–370 (PMGLDWTDRK…TAQSPLPVWS (83 aa)) is head domain (RuvB-H). Positions 343 and 348 each coordinate DNA.

This sequence belongs to the RuvB family. As to quaternary structure, homohexamer. Forms an RuvA(8)-RuvB(12)-Holliday junction (HJ) complex. HJ DNA is sandwiched between 2 RuvA tetramers; dsDNA enters through RuvA and exits via RuvB. An RuvB hexamer assembles on each DNA strand where it exits the tetramer. Each RuvB hexamer is contacted by two RuvA subunits (via domain III) on 2 adjacent RuvB subunits; this complex drives branch migration. In the full resolvosome a probable DNA-RuvA(4)-RuvB(12)-RuvC(2) complex forms which resolves the HJ.

Its subcellular location is the cytoplasm. The enzyme catalyses ATP + H2O = ADP + phosphate + H(+). The RuvA-RuvB-RuvC complex processes Holliday junction (HJ) DNA during genetic recombination and DNA repair, while the RuvA-RuvB complex plays an important role in the rescue of blocked DNA replication forks via replication fork reversal (RFR). RuvA specifically binds to HJ cruciform DNA, conferring on it an open structure. The RuvB hexamer acts as an ATP-dependent pump, pulling dsDNA into and through the RuvAB complex. RuvB forms 2 homohexamers on either side of HJ DNA bound by 1 or 2 RuvA tetramers; 4 subunits per hexamer contact DNA at a time. Coordinated motions by a converter formed by DNA-disengaged RuvB subunits stimulates ATP hydrolysis and nucleotide exchange. Immobilization of the converter enables RuvB to convert the ATP-contained energy into a lever motion, pulling 2 nucleotides of DNA out of the RuvA tetramer per ATP hydrolyzed, thus driving DNA branch migration. The RuvB motors rotate together with the DNA substrate, which together with the progressing nucleotide cycle form the mechanistic basis for DNA recombination by continuous HJ branch migration. Branch migration allows RuvC to scan DNA until it finds its consensus sequence, where it cleaves and resolves cruciform DNA. This Synechococcus sp. (strain JA-3-3Ab) (Cyanobacteria bacterium Yellowstone A-Prime) protein is Holliday junction branch migration complex subunit RuvB 2.